The chain runs to 315 residues: Alpha- and gamma-adaptin-binding protein p34 (315 aa).

Positions 197 to 234 are disordered; it reads IGSADPCHPEQPHLPAADSTESLSDHRGGASNTTDAQV. 2 positions are modified to phosphoserine: serine 310 and serine 311.

As to quaternary structure, associated with AP-1 and AP-2 complexes. As to expression, widely expressed, including in skin and keratinocytes, with highest levels in adrenal gland, rectum and thymus.

Its subcellular location is the cytoplasm. The protein resides in the cytosol. May be involved in endocytic recycling of growth factor receptors such as EGFR. The chain is Alpha- and gamma-adaptin-binding protein p34 (AAGAB) from Homo sapiens (Human).